Here is a 659-residue protein sequence, read N- to C-terminus: DNA ligase (659 aa).

NAD(+) contacts are provided by residues 32–36 (DAEYD), 81–82 (SL), and E110. K112 serves as the catalytic N6-AMP-lysine intermediate. Residues R133, E168, K284, and K308 each contribute to the NAD(+) site. Residues C402, C405, C420, and C425 each coordinate Zn(2+). One can recognise a BRCT domain in the interval 582-659 (AKPQIFAGKS…SEEEFAELLP (78 aa)).

Belongs to the NAD-dependent DNA ligase family. LigA subfamily. Mg(2+) is required as a cofactor. The cofactor is Mn(2+).

It catalyses the reaction NAD(+) + (deoxyribonucleotide)n-3'-hydroxyl + 5'-phospho-(deoxyribonucleotide)m = (deoxyribonucleotide)n+m + AMP + beta-nicotinamide D-nucleotide.. In terms of biological role, DNA ligase that catalyzes the formation of phosphodiester linkages between 5'-phosphoryl and 3'-hydroxyl groups in double-stranded DNA using NAD as a coenzyme and as the energy source for the reaction. It is essential for DNA replication and repair of damaged DNA. This chain is DNA ligase, found in Desulfitobacterium hafniense (strain DSM 10664 / DCB-2).